The chain runs to 583 residues: Laccase-14 (583 aa).

An N-terminal signal peptide occupies residues 1–30 (MAPSLGSGSTRILLIVSLLLCLRQQAVVDA). Plastocyanin-like domains are found at residues 38-158 (HVGN…PRPG) and 168-320 (AEHT…YDDD). Asn41 and Asn84 each carry an N-linked (GlcNAc...) asparagine glycan. 2 residues coordinate Cu cation: His88 and His90. An N-linked (GlcNAc...) asparagine glycan is attached at Asn126. Positions 137 and 139 each coordinate Cu cation. Residues Asn179, Asn251, Asn304, Asn338, Asn388, Asn400, Asn446, and Asn464 are each glycosylated (N-linked (GlcNAc...) asparagine). The Plastocyanin-like 3 domain maps to 426–567 (DFPDRPPVMF…AMAFDVQDGP (142 aa)). Residues His482, His485, His487, His546, Cys547, His548, and His552 each coordinate Cu cation.

The protein belongs to the multicopper oxidase family. Requires Cu cation as cofactor.

The protein resides in the secreted. The protein localises to the extracellular space. It localises to the apoplast. The catalysed reaction is 4 hydroquinone + O2 = 4 benzosemiquinone + 2 H2O. Its function is as follows. Lignin degradation and detoxification of lignin-derived products. The protein is Laccase-14 (LAC14) of Oryza sativa subsp. japonica (Rice).